We begin with the raw amino-acid sequence, 484 residues long: Putative transporter B0252.3 (484 aa).

11 helical membrane passes run 43–63, 95–115, 121–141, 144–164, 183–203, 208–228, 286–306, 321–341, 348–368, 373–393, and 433–453; these read ILTC…TGLC, STTT…PPLA, LPVF…SAFS, IMMF…AGLA, VYFG…AYIL, YLMF…YMTV, MFIV…FIYF, LNFV…PIFM, VLIS…VLSS, IHFW…IYMF, and LAPA…TLIL.

The protein belongs to the major facilitator superfamily. Sugar transporter (TC 2.A.1.1) family.

The protein resides in the membrane. The polypeptide is Putative transporter B0252.3 (Caenorhabditis elegans).